The following is a 361-amino-acid chain: UDP-N-acetylglucosamine--N-acetylmuramyl-(pentapeptide) pyrophosphoryl-undecaprenol N-acetylglucosamine transferase (361 aa).

Residues 12 to 14 (TGG), N123, R166, S192, and Q293 each bind UDP-N-acetyl-alpha-D-glucosamine.

This sequence belongs to the glycosyltransferase 28 family. MurG subfamily.

The protein localises to the cell inner membrane. It catalyses the reaction di-trans,octa-cis-undecaprenyl diphospho-N-acetyl-alpha-D-muramoyl-L-alanyl-D-glutamyl-meso-2,6-diaminopimeloyl-D-alanyl-D-alanine + UDP-N-acetyl-alpha-D-glucosamine = di-trans,octa-cis-undecaprenyl diphospho-[N-acetyl-alpha-D-glucosaminyl-(1-&gt;4)]-N-acetyl-alpha-D-muramoyl-L-alanyl-D-glutamyl-meso-2,6-diaminopimeloyl-D-alanyl-D-alanine + UDP + H(+). Its pathway is cell wall biogenesis; peptidoglycan biosynthesis. In terms of biological role, cell wall formation. Catalyzes the transfer of a GlcNAc subunit on undecaprenyl-pyrophosphoryl-MurNAc-pentapeptide (lipid intermediate I) to form undecaprenyl-pyrophosphoryl-MurNAc-(pentapeptide)GlcNAc (lipid intermediate II). This chain is UDP-N-acetylglucosamine--N-acetylmuramyl-(pentapeptide) pyrophosphoryl-undecaprenol N-acetylglucosamine transferase, found in Caulobacter vibrioides (strain ATCC 19089 / CIP 103742 / CB 15) (Caulobacter crescentus).